A 690-amino-acid polypeptide reads, in one-letter code: Glycine--tRNA ligase beta subunit (690 aa).

The protein belongs to the class-II aminoacyl-tRNA synthetase family. Tetramer of two alpha and two beta subunits.

Its subcellular location is the cytoplasm. It carries out the reaction tRNA(Gly) + glycine + ATP = glycyl-tRNA(Gly) + AMP + diphosphate. The protein is Glycine--tRNA ligase beta subunit of Desulfitobacterium hafniense (strain DSM 10664 / DCB-2).